The primary structure comprises 115 residues: Large ribosomal subunit protein bL20 (115 aa).

It belongs to the bacterial ribosomal protein bL20 family.

Its function is as follows. Binds directly to 23S ribosomal RNA and is necessary for the in vitro assembly process of the 50S ribosomal subunit. It is not involved in the protein synthesizing functions of that subunit. The protein is Large ribosomal subunit protein bL20 of Prochlorococcus marinus (strain AS9601).